A 359-amino-acid polypeptide reads, in one-letter code: MLYWLGLVLKSHIFLFNVLRYITFRALIAVIVSFLITLVLSPIFMRKVTALNRLYGGYVREDTPETHSKKKFVPSMGGLIIILSLELSSILLMRLDIAQTWIMAFTVFGFAIVGFIDDFVKLKNKKGISARSKMLGQIIVSFVSASLLYFVMHIDTHIYFPFFKSLKLDLGYFYIVFVMLILIATSNAVNLTDGLDGLAIVPAMTTAFALGIISYVAGNSILARYLEIHYVENAGELAIFGMAVVGAGLGFLWFNSFPAQMFMGDVGSLGLGAALGMLAIMSKQELTLIIAGGVFVVEALSVIIQVSVFKITKGKRVFKMAPIHHHFELNGTPEPKIVVRIWIISILLAIFTIATLKLR.

A run of 10 helical transmembrane segments spans residues 24 to 44 (FRAL…SPIF), 72 to 92 (FVPS…SILL), 100 to 120 (TWIM…DDFV), 134 to 154 (MLGQ…VMHI), 170 to 190 (LGYF…NAVN), 197 to 217 (GLAI…SYVA), 234 to 254 (AGEL…FLWF), 261 to 281 (MFMG…LAIM), 289 to 309 (IIAG…VSVF), and 336 to 356 (KIVV…IATL).

This sequence belongs to the glycosyltransferase 4 family. MraY subfamily. It depends on Mg(2+) as a cofactor.

It is found in the cell inner membrane. It catalyses the reaction UDP-N-acetyl-alpha-D-muramoyl-L-alanyl-gamma-D-glutamyl-meso-2,6-diaminopimeloyl-D-alanyl-D-alanine + di-trans,octa-cis-undecaprenyl phosphate = di-trans,octa-cis-undecaprenyl diphospho-N-acetyl-alpha-D-muramoyl-L-alanyl-D-glutamyl-meso-2,6-diaminopimeloyl-D-alanyl-D-alanine + UMP. The protein operates within cell wall biogenesis; peptidoglycan biosynthesis. Catalyzes the initial step of the lipid cycle reactions in the biosynthesis of the cell wall peptidoglycan: transfers peptidoglycan precursor phospho-MurNAc-pentapeptide from UDP-MurNAc-pentapeptide onto the lipid carrier undecaprenyl phosphate, yielding undecaprenyl-pyrophosphoryl-MurNAc-pentapeptide, known as lipid I. The sequence is that of Phospho-N-acetylmuramoyl-pentapeptide-transferase from Hydrogenobaculum sp. (strain Y04AAS1).